Here is a 90-residue protein sequence, read N- to C-terminus: MKTAIFTVVLALAVFAVLSFGWEANEKALSEEFTELIHEKEAASETEARECRYFWGECHDRMPCCDWLVCRYKWPITYNICVWNRTFPEK.

A signal peptide spans 1–19; the sequence is MKTAIFTVVLALAVFAVLS. A propeptide spanning residues 20 to 50 is cleaved from the precursor; that stretch reads FGWEANEKALSEEFTELIHEKEAASETEARE. 3 disulfides stabilise this stretch: C51-C65, C58-C70, and C64-C81.

It belongs to the neurotoxin 10 (Hwtx-1) family. 13 (Hntx-13) subfamily. As to expression, expressed by the venom gland.

The protein resides in the secreted. In terms of biological role, ion channel inhibitor. The sequence is that of U7-theraphotoxin-Hhn1e from Cyriopagopus hainanus (Chinese bird spider).